A 562-amino-acid polypeptide reads, in one-letter code: Endochitinase (562 aa).

The first 20 residues, Met-1 to Ala-20, serve as a signal peptide directing secretion. The GH18 domain maps to Thr-27–Ala-311. Glu-157 serves as the catalytic Proton donor. 2 disordered regions span residues Thr-329 to Thr-358 and Thr-461 to Thr-484. Residues Ser-481 to Phe-562 are chitin-binding, high affinity. The N-linked (GlcNAc...) asparagine glycan is linked to Asn-553.

Belongs to the glycosyl hydrolase 18 family. Chitinase class V subfamily. Extensively glycosylated with a series of short O-linked mannose oligosaccharides ranging in size from Man(2) to Man(5).

The protein localises to the secreted. The protein resides in the cell wall. It catalyses the reaction Random endo-hydrolysis of N-acetyl-beta-D-glucosaminide (1-&gt;4)-beta-linkages in chitin and chitodextrins.. Its function is as follows. Chitinase is required for cell separation during growth of S.cerevisiae. This Saccharomyces cerevisiae (strain ATCC 204508 / S288c) (Baker's yeast) protein is Endochitinase (CTS1).